Here is a 298-residue protein sequence, read N- to C-terminus: Mitochondrial dicarboxylate/tricarboxylate transporter DTC (298 aa).

Solcar repeat units lie at residues 12–93 (WTTV…LTAK), 103–194 (LPLY…SAEY), and 202–292 (GEMS…ITKF). A run of 6 helical transmembrane segments spans residues 18-38 (FVNG…IDMI), 68-88 (GLSA…GSFK), 109-129 (ALCG…ADLA), 169-189 (GCGP…ASYD), 208-228 (VGAS…FDFV), and 268-288 (FPVY…FLNQ).

Belongs to the mitochondrial carrier (TC 2.A.29) family. Highly expressed in flower buds and at lower levels in roots, leaves and stems.

The protein resides in the mitochondrion inner membrane. Catalyzes the transport of dicarboxylates, such as oxoglutarate, oxaloacetate, malate, and succinate, and of tricarboxylates, such as citrate, isocitrate, cis-aconitate, and trans-aconitate by a counter-exchange mechanism across the inner mitochondrial membrane. Substrate preference in reconstituted proteoliposomes is oxaloacetate &gt; malonate &gt; malate &gt; maleate &gt; succinate &gt; oxoglutarate &gt; citrate &gt; trans-aconitate &gt; cis-aconitate &gt; sulfate &gt; isocitrate. May be important for plant metabolic functions requiring organic acid flux to or from the mitochondria, such as nitrogen assimilation, export of reducing equivalents from the mitochondria, and fatty acid elongation. The polypeptide is Mitochondrial dicarboxylate/tricarboxylate transporter DTC (DTC) (Arabidopsis thaliana (Mouse-ear cress)).